Consider the following 232-residue polypeptide: Small ribosomal subunit protein uS3 (232 aa).

The region spanning 39–107 (IREILHKELK…DVVINIVEIR (69 aa)) is the KH type-2 domain.

It belongs to the universal ribosomal protein uS3 family. As to quaternary structure, part of the 30S ribosomal subunit. Forms a tight complex with proteins S10 and S14.

Binds the lower part of the 30S subunit head. Binds mRNA in the 70S ribosome, positioning it for translation. The sequence is that of Small ribosomal subunit protein uS3 from Rhodopseudomonas palustris (strain BisB18).